A 131-amino-acid polypeptide reads, in one-letter code: Small ribosomal subunit protein uS8 (131 aa).

The protein belongs to the universal ribosomal protein uS8 family. In terms of assembly, part of the 30S ribosomal subunit. Contacts proteins S5 and S12.

One of the primary rRNA binding proteins, it binds directly to 16S rRNA central domain where it helps coordinate assembly of the platform of the 30S subunit. The polypeptide is Small ribosomal subunit protein uS8 (Polaromonas sp. (strain JS666 / ATCC BAA-500)).